Here is a 357-residue protein sequence, read N- to C-terminus: MSDSKNLNQERQKALDNAISQIEKAFGRGAIMKLKQGAIEKIDSISTGSIALDTALGIGGFPKGRIVEIFGPESSGKTTLALHVIAESQKKGGNCAFIDAEHALDIMYARKLGVNTGDLIVSQPDTGEQALHIVEYLVCSGAIDVIVVDSVAALTPRAEIEGDMGDQHMGLQARLLSHALRKLTSIVSKANCVLIFINQIRMKIGVVYGNPETTTGGNALKFYSSVRLDIRKVSAIKDKDLIIGNQTKVKVVKNKVAPPFKQVDFDIMYNEGISKVGEIIDMGVKLNIIEKAGAYYSYNGIRLGQGKENAKSYLKTNYTTADEIEQKIRNMLASDSDVTCFNTEGSDNLHEVEEAIF.

71–78 (GPESSGKT) contacts ATP.

The protein belongs to the RecA family.

It is found in the cytoplasm. Can catalyze the hydrolysis of ATP in the presence of single-stranded DNA, the ATP-dependent uptake of single-stranded DNA by duplex DNA, and the ATP-dependent hybridization of homologous single-stranded DNAs. It interacts with LexA causing its activation and leading to its autocatalytic cleavage. This Ehrlichia canis (strain Jake) protein is Protein RecA.